The following is a 423-amino-acid chain: Carboxypeptidase B2 (423 aa).

A signal peptide spans 1-22 (MKLYSLGVLVATVLFCGEHAFA). Residues 23-114 (FQRGQVLSAL…QTSNDTISPR (92 aa)) constitute a propeptide, activation peptide. 4 N-linked (GlcNAc...) asparagine glycosylation sites follow: asparagine 44, asparagine 73, asparagine 85, and asparagine 108. Positions 122–419 (QYHSLNEIYS…VAVAKIASHV (298 aa)) constitute a Peptidase M14 domain. A disulfide bridge connects residues cysteine 178 and cysteine 191. The Zn(2+) site is built by histidine 181 and glutamate 184. Substrate contacts are provided by residues 181–184 (HARE) and arginine 239. N-linked (GlcNAc...) asparagine glycosylation occurs at asparagine 241. Disulfide bonds link cysteine 250–cysteine 274 and cysteine 265–cysteine 279. 256–257 (NR) provides a ligand contact to substrate. Histidine 310 is a binding site for Zn(2+). Residues 311-312 (SY) and tyrosine 363 each bind substrate. The Proton donor/acceptor role is filled by glutamate 385.

This sequence belongs to the peptidase M14 family. Requires Zn(2+) as cofactor.

It is found in the secreted. It catalyses the reaction Release of C-terminal Arg and Lys from a polypeptide.. With respect to regulation, TAFI/CPB2 is unique among carboxypeptidases in that it spontaneously inactivates with a short half-life, a property that is crucial for its role in controlling blood clot lysis. The zymogen is stabilized by interactions with the activation peptide. Release of the activation peptide increases a dynamic flap mobility and in time this leads to conformational changes that disrupt the catalytic site and expose a cryptic thrombin-cleavage site present at Arg-324. Its function is as follows. Cleaves C-terminal arginine or lysine residues from biologically active peptides such as kinins or anaphylatoxins in the circulation thereby regulating their activities. Down-regulates fibrinolysis by removing C-terminal lysine residues from fibrin that has already been partially degraded by plasmin. In Bos taurus (Bovine), this protein is Carboxypeptidase B2 (CPB2).